The sequence spans 169 residues: Allophycocyanin subunit beta-18 (169 aa).

Residue Asn-72 is modified to N4-methylasparagine. (2R,3E)-phycocyanobilin is bound at residue Cys-82.

It belongs to the phycobiliprotein family. Heterodimer of ApcE and this beta chain. Contains one covalently linked bilin chromophore. The chromophore is added by phycocyanobilin lyase CpcS 1.

The protein localises to the cellular thylakoid membrane. Its function is as follows. A variant beta-allophycocyanin (AP) which forms a complex with ApcE, a phycobilisome terminal emitter that influences energy transfer to photosystem II. This is Allophycocyanin subunit beta-18 (apcF) from Nostoc sp. (strain PCC 7120 / SAG 25.82 / UTEX 2576).